A 419-amino-acid chain; its full sequence is Pygopus homolog 1 (419 aa).

2 disordered regions span residues 1–64 and 175–338; these read MPAE…PNSD and HFRQ…SSSD. Positions 18-30 are enriched in gly residues; sequence GDSGLDGLGGPGV. The Nuclear localization signal motif lies at 35–41; it reads PDKKKRK. Composition is skewed to polar residues over residues 175–221 and 240–255; these read HFRQ…SNHS and DFTQGATKNTNQNSSA. The span at 276 to 286 shows a compositional bias: low complexity; that stretch reads VNRNNAVNQEN. Over residues 287–307 the composition is skewed to polar residues; sequence SRSSSTEATNNNPANGTQNKP. The PHD-type zinc-finger motif lies at 340 to 398; it reads VYPCGICTNEVNDDQDAILCEASCQKWFHRICTGMTETAYGLLTAEASAVWGCDTCMAD. The tract at residues 341 to 388 is interaction with H3K4me2; the sequence is YPCGICTNEVNDDQDAILCEASCQKWFHRICTGMTETAYGLLTAEASA. The interaction with BCL9 stretch occupies residues 373 to 391; it reads GMTETAYGLLTAEASAVWG.

Interacts with BCL9 via The PHD-type zinc finger motiv, and thereby becomes part of the nuclear beta-catenin/TCF complex. Identified in a complex with BCL9L, CDC73, CTNNB1 and PYGO1. Interacts with histone H3 mono-, di- or tri-methylated at 'Lys4' (H3K4me1, H3K4me2, H3K4me3); the interaction is enhanced by the interaction with BCL9.

The protein localises to the nucleus. Involved in signal transduction through the Wnt pathway. This chain is Pygopus homolog 1 (PYGO1), found in Homo sapiens (Human).